The chain runs to 89 residues: MSIAAERKAEVIKTNARKDGDTGSPEVQVAILSERIANLTAHFKTHVKDNHSRRGLLKLVSTRRSLLDYVKKRDEARYKALLEKHNIRR.

Residues 1-21 show a composition bias toward basic and acidic residues; sequence MSIAAERKAEVIKTNARKDGD. Residues 1–24 are disordered; it reads MSIAAERKAEVIKTNARKDGDTGS.

The protein belongs to the universal ribosomal protein uS15 family. Part of the 30S ribosomal subunit. Forms a bridge to the 50S subunit in the 70S ribosome, contacting the 23S rRNA.

Functionally, one of the primary rRNA binding proteins, it binds directly to 16S rRNA where it helps nucleate assembly of the platform of the 30S subunit by binding and bridging several RNA helices of the 16S rRNA. Its function is as follows. Forms an intersubunit bridge (bridge B4) with the 23S rRNA of the 50S subunit in the ribosome. The sequence is that of Small ribosomal subunit protein uS15 from Rhodopseudomonas palustris (strain BisA53).